Consider the following 953-residue polypeptide: Lysosomal alpha-glucosidase (953 aa).

A signal peptide spans 1–27 (MNIRKPLCSNSVVGACTLVSLTTAVIL). A propeptide spanning residues 28–69 (GHLMLRELMLLPQDLHESSSGLWKTYRPHHQESYEPAPLHIQ) is cleaved from the precursor. Positions 80–131 (TQCDVTPNSRFDCAPDKGITQEQCEARGCCWVPAGQVLNGPVMGQPWCFFPP) constitute a P-type domain. Cystine bridges form between C82-C109, C92-C108, and C103-C127. N-linked (GlcNAc...) asparagine glycosylation is found at N140, N233, and N390. Residue D404 participates in substrate binding. N470 carries an N-linked (GlcNAc...) asparagine glycan. The active-site Nucleophile is D518. E521 is a catalytic residue. A disulfide bond links C533 and C558. Residues R600 and D616 each coordinate substrate. A disulfide bridge links C647 with C658. N652 carries N-linked (GlcNAc...) asparagine glycosylation. Residue H674 participates in substrate binding. 2 N-linked (GlcNAc...) asparagine glycosylation sites follow: N883 and N926.

It belongs to the glycosyl hydrolase 31 family.

It localises to the lysosome. It is found in the lysosome membrane. It carries out the reaction Hydrolysis of terminal, non-reducing (1-&gt;4)-linked alpha-D-glucose residues with release of alpha-D-glucose.. Essential for the degradation of glycogen in lysosomes. Has highest activity on alpha-1,4-linked glycosidic linkages, but can also hydrolyze alpha-1,6-linked glucans. The sequence is that of Lysosomal alpha-glucosidase (Gaa) from Rattus norvegicus (Rat).